The chain runs to 605 residues: Capsid scaffolding protein (605 aa).

Residues His-48, Ser-116, and His-139 each act as charge relay system in the active site. The tract at residues 235 to 274 is disordered; it reads ASDAPDLQKPDKALQSPPPASTDPATMLSGNAGEGATACG. Residues 281–300 are interaction with pAP; sequence QDLISVPRNTFMTLLQTNLD. 2 disordered regions span residues 403–432 and 489–588; these read DYVP…PGED and PHQS…KSVS. The Nuclear localization signal motif lies at 410-416; sequence RSNKRKR. Residues 568-579 are compositionally biased toward polar residues; that stretch reads ASASGVAQSKEP. Residues 585–605 form an interaction with major capsid protein region; sequence KSVSAHLKSIFCEELLNKRVA.

This sequence belongs to the herpesviridae capsid scaffolding protein family. In terms of assembly, homomultimer. Interacts with major capsid protein. Exists in a monomer-dimer equilibrium with the dimer being the active species. In terms of processing, capsid scaffolding protein is cleaved by assemblin after formation of the spherical procapsid. As a result, the capsid obtains its mature, icosahedral shape. Cleavages occur at two or more sites: release (R-site) and maturation (M-site).

Its subcellular location is the host cytoplasm. It localises to the host nucleus. It carries out the reaction Cleaves -Ala-|-Ser- and -Ala-|-Ala- bonds in the scaffold protein.. Acts as a scaffold protein by binding major capsid protein in the cytoplasm, inducing the nuclear localization of both proteins. Multimerizes in the nucleus such as major capsid protein forms the icosahedral T=16 capsid. Autocatalytic cleavage releases the assembly protein, and subsequently abolishes interaction with major capsid protein. Cleavages products are evicted from the capsid before or during DNA packaging. Functionally, protease that plays an essential role in virion assembly within the nucleus. Catalyzes the cleavage of the assembly protein after formation of the spherical procapsid. By that cleavage, the capsid matures and gains its icosahedral shape. The cleavage sites seem to include -Ala-Ser-, -Ala-Ala-, as well as Ala-Thr bonds. Assemblin and cleavages products are evicted from the capsid before or during DNA packaging. In terms of biological role, plays a major role in capsid assembly. Acts as a scaffold protein by binding major capsid protein. Multimerizes in the nucleus such as major capsid protein forms the icosahedral T=16 capsid. Cleaved by assemblin after capsid completion. The cleavages products are evicted from the capsid before or during DNA packaging. This is Capsid scaffolding protein from Homo sapiens (Human).